A 465-amino-acid chain; its full sequence is Catalase cnsD (465 aa).

The active site involves histidine 39. Tyrosine 331 contributes to the heme binding site.

It belongs to the catalase family. Heme serves as cofactor.

The protein operates within alkaloid biosynthesis. Functionally, catalase; part of the gene cluster that mediates the biosynthesis of communesins, a prominent class of indole alkaloids with great potential as pharmaceuticals. Communesins are biosynthesized by the coupling of tryptamine and aurantioclavine, two building blocks derived from L-tryptophan. The L-tryptophan decarboxylase cnsB converts L-tryptophan to tryptamine, whereas the tryptophan dimethylallyltransferase cnsF converts L-tryptophan to 4-dimethylallyl tryptophan which is further transformed to aurantioclavine by the aurantioclavine synthase cnsA, probably aided by the catalase cnsD. The cytochrome P450 monooxygenase cnsC catalyzes the heterodimeric coupling between the two different indole moieties, tryptamine and aurantioclavine, to construct vicinal quaternary stereocenters and yield the heptacyclic communesin scaffold. The O-methyltransferase cnsE then methylates the communesin scaffold to produce communesin K, the simplest characterized communesin that contains the heptacyclic core. The dioxygenase cnsJ converts communesin K into communesin I. Acylation to introduce the hexadienyl group at position N16 of communesin I by the acyltransferase cnsK leads to the production of communesin B. The hexadienyl group is produced by the highly reducing polyketide synthase cnsI, before being hydrolytically removed from cnsI by the serine hydrolase cnsH, converted into hexadienyl-CoA by the CoA ligase cnsG, and then transferred to communesin I by cnsK. Surprisingly, cnsK may also be a promiscuous acyltransferase that can tolerate a range of acyl groups, including acetyl-, propionyl-, and butyryl-CoA, which lead to communesins A, G and H respectively. The roles of the alpha-ketoglutarate-dependent dioxygenases cnsM and cnsP have still to be determined. This Penicillium expansum (Blue mold rot fungus) protein is Catalase cnsD.